Consider the following 377-residue polypeptide: Cytoplasmic tRNA 2-thiolation protein 1 (377 aa).

This sequence belongs to the TtcA family. CTU1/NCS6/ATPBD3 subfamily.

It localises to the cytoplasm. It functions in the pathway tRNA modification; 5-methoxycarbonylmethyl-2-thiouridine-tRNA biosynthesis. Functionally, plays a central role in 2-thiolation of mcm(5)S(2)U at tRNA wobble positions of tRNA(Lys), tRNA(Glu) and tRNA(Gln). Directly binds tRNAs and probably acts by catalyzing adenylation of tRNAs, an intermediate required for 2-thiolation. It is unclear whether it acts as a sulfurtransferase that transfers sulfur from thiocarboxylated URM1 onto the uridine of tRNAs at wobble position. Prior mcm(5) tRNA modification by the elongator complex is required for 2-thiolation. May also be involved in protein urmylation. This is Cytoplasmic tRNA 2-thiolation protein 1 from Debaryomyces hansenii (strain ATCC 36239 / CBS 767 / BCRC 21394 / JCM 1990 / NBRC 0083 / IGC 2968) (Yeast).